The primary structure comprises 460 residues: Bifunctional protein GlmU (460 aa).

A pyrophosphorylase region spans residues 1-232 (MALNVVILAA…AIEVEGANNR (232 aa)). Residues 8 to 11 (LAAG), K22, Q73, 78 to 79 (GT), 100 to 102 (YGD), G137, E157, N172, and N230 each bind UDP-N-acetyl-alpha-D-glucosamine. D102 lines the Mg(2+) pocket. N230 contacts Mg(2+). The tract at residues 233–253 (VQLAQLERAYQAREAEKLMLA) is linker. An N-acetyltransferase region spans residues 254–460 (GANLRDPSRI…GWQRPVKIKK (207 aa)). R336 and K354 together coordinate UDP-N-acetyl-alpha-D-glucosamine. The active-site Proton acceptor is the H366. Residues Y369 and N380 each coordinate UDP-N-acetyl-alpha-D-glucosamine. Acetyl-CoA-binding positions include A383, 389–390 (NY), S408, A426, and R443.

It in the N-terminal section; belongs to the N-acetylglucosamine-1-phosphate uridyltransferase family. In the C-terminal section; belongs to the transferase hexapeptide repeat family. In terms of assembly, homotrimer. Requires Mg(2+) as cofactor.

It is found in the cytoplasm. It carries out the reaction alpha-D-glucosamine 1-phosphate + acetyl-CoA = N-acetyl-alpha-D-glucosamine 1-phosphate + CoA + H(+). It catalyses the reaction N-acetyl-alpha-D-glucosamine 1-phosphate + UTP + H(+) = UDP-N-acetyl-alpha-D-glucosamine + diphosphate. Its pathway is nucleotide-sugar biosynthesis; UDP-N-acetyl-alpha-D-glucosamine biosynthesis; N-acetyl-alpha-D-glucosamine 1-phosphate from alpha-D-glucosamine 6-phosphate (route II): step 2/2. The protein operates within nucleotide-sugar biosynthesis; UDP-N-acetyl-alpha-D-glucosamine biosynthesis; UDP-N-acetyl-alpha-D-glucosamine from N-acetyl-alpha-D-glucosamine 1-phosphate: step 1/1. It participates in bacterial outer membrane biogenesis; LPS lipid A biosynthesis. Functionally, catalyzes the last two sequential reactions in the de novo biosynthetic pathway for UDP-N-acetylglucosamine (UDP-GlcNAc). The C-terminal domain catalyzes the transfer of acetyl group from acetyl coenzyme A to glucosamine-1-phosphate (GlcN-1-P) to produce N-acetylglucosamine-1-phosphate (GlcNAc-1-P), which is converted into UDP-GlcNAc by the transfer of uridine 5-monophosphate (from uridine 5-triphosphate), a reaction catalyzed by the N-terminal domain. This chain is Bifunctional protein GlmU, found in Shewanella baltica (strain OS185).